Here is a 53-residue protein sequence, read N- to C-terminus: Rubredoxin (53 aa).

The region spanning 1–53 (MTKYVCTVCGYVYDPEVGDPDNNINPGTSFQDIPEDWVCPLCGVGKDQFEEEA) is the Rubredoxin-like domain. Cysteine 6, cysteine 9, cysteine 39, and cysteine 42 together coordinate Fe cation.

It belongs to the rubredoxin family. The cofactor is Fe(3+).

Rubredoxin is a small nonheme, iron protein lacking acid-labile sulfide. Its single Fe, chelated to 4 Cys, functions as an electron acceptor and may also stabilize the conformation of the molecule. This is Rubredoxin from Acetoanaerobium sticklandii (strain ATCC 12662 / DSM 519 / JCM 1433 / CCUG 9281 / NCIMB 10654 / HF) (Clostridium sticklandii).